A 146-amino-acid polypeptide reads, in one-letter code: Large ribosomal subunit protein uL13 (146 aa).

The protein belongs to the universal ribosomal protein uL13 family. In terms of assembly, part of the 50S ribosomal subunit.

Functionally, this protein is one of the early assembly proteins of the 50S ribosomal subunit, although it is not seen to bind rRNA by itself. It is important during the early stages of 50S assembly. The polypeptide is Large ribosomal subunit protein uL13 (Malacoplasma penetrans (strain HF-2) (Mycoplasma penetrans)).